A 121-amino-acid chain; its full sequence is Huntingtin-interacting protein K (121 aa).

Over residues 1–13 (MATEGDVELELET) the composition is skewed to acidic residues. The interval 1–75 (MATEGDVELE…EQKAKQEREK (75 aa)) is disordered. 2 stretches are compositionally biased toward basic and acidic residues: residues 20-47 (RPPE…EKEI) and 60-75 (GDRR…EREK). S30 carries the post-translational modification Phosphoserine. The required for association with the NAA10-NAA15 complex stretch occupies residues 52-121 (LETAMSVIGD…VVEALIALTN (70 aa)). Residues 62 to 107 (RRSREQKAKQEREKELAKVTIKKEDLELIMTEMEISRAAAERSLRE) are a coiled coil.

As to quaternary structure, component of the N-terminal acetyltransferase A (NatA)/HYPK complex at least composed of NAA10, NAA15 and HYPK, which has N-terminal acetyltransferase activity. Within the complex interacts with NAA10. Within the complex interacts with NAA15. Predominantly interacts with NAA15 in the NAA10-NAA15 complex (also called the NatA complex); the interaction with the NatA complex reduces the acetylation activity of the NatA complex. Interacts with HTT (via N-terminus). The NatA complex is required for HYPK stability and for reducing polyQ aggregation of HTT. Component of the N-terminal acetyltransferase E (NatE)/HYPK complex at least composed of NAA10, NAA15, NAA50 and HYPK. Within the complex interacts with NAA10 and NAA15. Does not interact with NAA50. Interaction with NAA15 reduces the capacity of NAA15 to interact with NAA50. Its capacity to interact with the NatA complex is reduced by NAA50. Does not interact with the N-terminal acetyltransferase B (NatB) complex component NAA25 or the N-terminal acetyltransferase C (NatC) complex component NAA35.

The protein localises to the nucleus. It is found in the cytoplasm. Component of several N-terminal acetyltransferase complexes. Inhibits the N-terminal acetylation activity of the N-terminal acetyltransferase NAA10-NAA15 complex (also called the NatA complex). Has chaperone-like activity preventing polyglutamine (polyQ) aggregation of HTT in neuronal cells probably while associated with the NatA complex. May play a role in the NatA complex-mediated N-terminal acetylation of PCNP. In Homo sapiens (Human), this protein is Huntingtin-interacting protein K.